We begin with the raw amino-acid sequence, 250 residues long: Kv channel-interacting protein 4 (250 aa).

The interval 2–44 is KIS; sequence NVRRVESISAQLEEASSTGGFLYAQNNTKRSIKERLMKLLPCS. Ser17 and Ser56 each carry phosphoserine. In terms of domain architecture, EF-hand 1; degenerate spans 61 to 117; that stretch reads LEMATVRHRPEALELLEAQSKFTKKELQILYRGFKNECPSGVVNEETFKEIYSQFFP. 3 EF-hand domains span residues 120–155, 156–191, and 204–239; these read DSTT…LLRG, TVQE…IYDM, and APRQ…DENI. Residues Asp133, Asp135, Asn137, Asp144, Asp169, Asn171, Asp173, Tyr175, Glu180, Asp217, Asn219, Asp221, and Glu228 each contribute to the Ca(2+) site. Residues 237-250 are interaction with KCND2; the sequence is ENIMRSMQLFENVI.

The protein belongs to the recoverin family. As to quaternary structure, component of heteromultimeric potassium channels. Identified in potassium channel complexes containing KCND1, KCND2, KCND3, KCNIP1, KCNIP2, KCNIP3, KCNIP4, DPP6 and DPP10. Interacts with the C-terminus of PSEN2 and probably PSEN1. Interacts with KCND2 and KCND3. As to expression, expressed in brain. Highly expressed by neurons in layers II-IV of cortex and in hippocampus, thalamus and the Purkinje cell layer of the cerebellum.

The protein localises to the cell membrane. Its subcellular location is the cytoplasm. It is found in the peroxisome. Regulatory subunit of Kv4/D (Shal)-type voltage-gated rapidly inactivating A-type potassium channels, such as KCND2/Kv4.2 and KCND3/Kv4.3. Modulates channel expression at the cell membrane, gating characteristics, inactivation kinetics and rate of recovery from inactivation in a calcium-dependent and isoform-specific manner. This is Kv channel-interacting protein 4 (Kcnip4) from Mus musculus (Mouse).